A 337-amino-acid chain; its full sequence is Protein FAM169B (337 aa).

The segment at 278 to 326 is disordered; sequence STVHPKCSEEDTDTPGQASQEDGPTQFNHGESHKEWAVGEPERTQNGRR. The segment covering 291-306 has biased composition (polar residues); the sequence is TPGQASQEDGPTQFNH. Basic and acidic residues predominate over residues 307 to 322; the sequence is GESHKEWAVGEPERTQ.

Belongs to the FAM169 family.

In Mus musculus (Mouse), this protein is Protein FAM169B (Fam169b).